Consider the following 595-residue polypeptide: MQSTSKYNCDSDYIAGRNYNTKRTNGREELSTGLTNEETGVVNISDENNIFFKKNIDYVKGSRIGKYKLIKTLGKGSCAKVVQAEDCETGEYVAIKIIERTPKQLSDIRIYREALICSLFNHPHIIKLLDFFHTTEYFFLIFEYVDGQQLYDIILNKGYLDEDEARKYFRQIISAVDYSHRNSVVHRDLKIENILIDRNDNIKLIDFGLSNFYDADDLLGTFCGSLYFAAPELLLGTRYTGPEIDVWSLGVILYVMLVGKVPFDDENIHALQNKIKSCKFKFEKTISPEAQDLITNMILSSDARINLENVKKSKWTNLGYKNLTNNFMTLRKPIIEINKNILRALQAAMFFQFTDMERVLMQYLQICKGDKHSLEQTYWCKKPVVILYYLTMEKFNELNYKSIPIDIDTGMNTKSLIDITIEKQPIIIYNFVRFTNAKKNNNPYNLFFSRSVFEPEMEFLNMTKDVSLDSCNISEDENKKHNFPKIKQSIIKGLFKGIKIKNGDKDYVKNAIIKILLDLDITYEANEKSYFCSYSHSGVECHFKIDLYFNILLLEHYVVLNCLNRKKDNFKLVTELIKEKLEEIGDTSNYPENAI.

Residues 67 to 316 (YKLIKTLGKG…LENVKKSKWT (250 aa)) enclose the Protein kinase domain. ATP is bound by residues 73–81 (LGKGSCAKV) and Lys96. Asp188 (proton acceptor) is an active-site residue.

This sequence belongs to the protein kinase superfamily. CAMK Ser/Thr protein kinase family. NIM1 subfamily.

It is found in the cytoplasm. The protein localises to the cell membrane. It catalyses the reaction L-seryl-[protein] + ATP = O-phospho-L-seryl-[protein] + ADP + H(+). The catalysed reaction is L-threonyl-[protein] + ATP = O-phospho-L-threonyl-[protein] + ADP + H(+). Serine/threonine protein kinase involved in regulation of exocytosis. The chain is Probable serine/threonine-protein kinase KIN1 homolog (KIN1) from Enterocytozoon bieneusi (strain H348) (Microsporidian parasite).